A 568-amino-acid polypeptide reads, in one-letter code: Protein OCTOPUS-like (568 aa).

Disordered stretches follow at residues 1–27 (MNLSADQAPVTAVDELAPPSQPHRLST), 78–99 (LFKPSSSGTNNSNGNGRVRPGF), 168–203 (EEAEIEEDEENGEKDPGEIVEEKSSEIGEEEEELKP), 242–276 (QKQKVKKPRNGVGGGRPQSEIGVGRRSSDTDPRFS), 360–428 (PGGS…DKKS), 446–512 (DDEE…SKDG), and 526–558 (RSWKTSGGSGGGGGGGGGGGWEKTAAKANSHGH). Residues 82-93 (SSSGTNNSNGNG) are compositionally biased toward low complexity. Acidic residues predominate over residues 168-179 (EEAEIEEDEENG). Residues 180–193 (EKDPGEIVEEKSSE) show a composition bias toward basic and acidic residues. Phosphoserine is present on S260. The segment covering 400-423 (SVSNSTTTIDSNSMETAENKGNQN) has biased composition (polar residues). The span at 532-546 (GGSGGGGGGGGGGGW) shows a compositional bias: gly residues.

Belongs to the OCTOPUS family. Post-translationally, phosphorylation at Ser-260 amplifies the promotion of protophloem differentiation.

The protein resides in the cell membrane. Its subcellular location is the cytoplasm. Its function is as follows. Potentiates primary root protophloem differentiation. Regulates roots architecture. This Arabidopsis thaliana (Mouse-ear cress) protein is Protein OCTOPUS-like.